Reading from the N-terminus, the 270-residue chain is S-adenosylmethionine decarboxylase proenzyme (270 aa).

The active-site Schiff-base intermediate with substrate; via pyruvic acid is Ser117. Residue Ser117 is modified to Pyruvic acid (Ser); by autocatalysis. Residue His122 is the Proton acceptor; for processing activity of the active site. The active-site Proton donor; for catalytic activity is the Cys145.

The protein belongs to the prokaryotic AdoMetDC family. Type 2 subfamily. In terms of assembly, heterooctamer of four alpha and four beta chains arranged as a tetramer of alpha/beta heterodimers. Pyruvate serves as cofactor. In terms of processing, is synthesized initially as an inactive proenzyme. Formation of the active enzyme involves a self-maturation process in which the active site pyruvoyl group is generated from an internal serine residue via an autocatalytic post-translational modification. Two non-identical subunits are generated from the proenzyme in this reaction, and the pyruvate is formed at the N-terminus of the alpha chain, which is derived from the carboxyl end of the proenzyme. The post-translation cleavage follows an unusual pathway, termed non-hydrolytic serinolysis, in which the side chain hydroxyl group of the serine supplies its oxygen atom to form the C-terminus of the beta chain, while the remainder of the serine residue undergoes an oxidative deamination to produce ammonia and the pyruvoyl group blocking the N-terminus of the alpha chain.

The enzyme catalyses S-adenosyl-L-methionine + H(+) = S-adenosyl 3-(methylsulfanyl)propylamine + CO2. It functions in the pathway amine and polyamine biosynthesis; S-adenosylmethioninamine biosynthesis; S-adenosylmethioninamine from S-adenosyl-L-methionine: step 1/1. In terms of biological role, catalyzes the decarboxylation of S-adenosylmethionine to S-adenosylmethioninamine (dcAdoMet), the propylamine donor required for the synthesis of the polyamines spermine and spermidine from the diamine putrescine. This Pseudoalteromonas translucida (strain TAC 125) protein is S-adenosylmethionine decarboxylase proenzyme.